A 1197-amino-acid polypeptide reads, in one-letter code: Transient receptor potential cation channel subfamily A member 1 (1197 aa).

Topologically, residues 1-753 (MTSGDKETPK…KWNSYGKYFH (753 aa)) are cytoplasmic. ANK repeat units lie at residues 89 to 118 (KGRT…DFNA), 122 to 151 (AGNT…DTGV), 155 to 184 (KKQA…VIDI), 190 to 219 (HGRT…ACPR), 224 to 253 (NGYY…QRGC), 265 to 294 (EGNV…KIST), 298 to 327 (DLST…MEKR), 336 to 365 (QKMT…DINA), 369 to 398 (EHRS…CISV), 443 to 472 (MGCS…CINL), 476 to 505 (NNES…GSFI), 512 to 541 (AGMT…LLHR), 544 to 574 (TGRN…LLDQ), and 578 to 607 (DGNT…KLVY). Residues 754 to 774 (LANLLIYSIFLVFVTIYSSLM) form a helical membrane-spanning segment. At 775–827 (MNNIELKAGDNKTMSQYCNMGWEQLTMNLSQNPSVASQIRLDSCEERINRTTA) the chain is on the extracellular side. N-linked (GlcNAc...) asparagine glycosylation is found at Asn-785, Asn-802, and Asn-823. Residues 828-848 (ILFCAVVIVVYILLNSMRELI) traverse the membrane as a helical segment. Residues 849–856 (QIYQQKLH) are Cytoplasmic-facing. Residues 857 to 877 (YILETVNLISWVLYISALVMV) traverse the membrane as a helical segment. Over 878-889 (TPAFQPDGGINT) the chain is Extracellular. The helical transmembrane segment at 890–910 (IHYSAASIAVFLSWFRLLLFL) threads the bilayer. The Cytoplasmic segment spans residues 911 to 932 (QRFDQVGIYVVMFLEILQTLIK). Residues 933 to 953 (VLMVFSILIIAFGLAFYILLS) form a helical membrane-spanning segment. At 954-968 (KIIDPQPNHLSFSNI) the chain is on the extracellular side. An intramembrane region (pore-forming) is located at residues 969–989 (PMSLLRTFSMMLGELDFVGTY). Topologically, residues 990–1004 (VNTYYRDQLKVPMTS) are extracellular. Residues 1005–1025 (FLILSVFMILMPILLMNLLIG) form a helical membrane-spanning segment. The Cytoplasmic segment spans residues 1026–1197 (LAVGDIESVR…RAALSFNKSM (172 aa)).

Belongs to the transient receptor (TC 1.A.4) family. As to quaternary structure, homotetramer.

Its subcellular location is the cell membrane. Essential for thermotaxis by sensing environmental temperature. Receptor-activated non-selective cation channel involved in detection of sensations such as temperature. Involved in heat nociception by being activated by warm temperature of about 24-29 degrees Celsius. This chain is Transient receptor potential cation channel subfamily A member 1 (TrpA1), found in Drosophila melanogaster (Fruit fly).